We begin with the raw amino-acid sequence, 579 residues long: MDFEDDYTHSACRNTYQSFNGMDRDYGPGSYGGMDRDYGHGSYGGQRSMDSYLNQSYGMDNHSGGGGGSRFGPYESYDSRSSLGGRDLYRSGYGFNEPEQSRFGGSYGGRFESSYRNSLDSFGGRNQGGSSWEAPYSRSKLRPGFMEDRGRENYSSYSSFSSPHMKPAPVGSRGRGTPAYPESTFGSRNYDAFGGPSTGRGRGRGHMSDFGSIHRPGIVVDYQNKPTNVTVAAARGIKRKMIQPFNKPGGTFIKKPKLAKPVEKMSLSKSPTKTDPKNEEEEKRRIEARREKQRRRREKNSEKYGDGYRMAFTCSFCKFRTFEEKDIELHLESASHQETLDHIQKQTKFDKVVMEFLHECMVNKFKKTSIRKQQTNNQTEAVKIIEKDVMEGVTADDHMMKVETVHCSACSVYIPALHSSVQQHLKSPDHIKGKQAYKEQIKRESVLTATSILNNPIVKARYERFIKGENPFEIQDHSQDQQIEGDEEEEEKIDEPVEEEEEEEEEEEEVGEVEEAEEVGEGGGVEGVGDTEEGGDVEGEGEVGAVGEGEGEGEGVGEVEEEEAKEEPVGFSVDQAEEN.

A mediates transcriptional activation region spans residues 1–124; the sequence is MDFEDDYTHS…YRNSLDSFGG (124 aa). S48, S56, S63, S69, S81, S82, S91, S106, S114, S118, S121, and S137 each carry phosphoserine. A Glycyl lysine isopeptide (Lys-Gly) (interchain with G-Cter in SUMO2) cross-link involves residue K140. Residues 154–194 are disordered; that stretch reads YSSYSSFSSPHMKPAPVGSRGRGTPAYPESTFGSRNYDAFG. R173 is subject to Omega-N-methylarginine. S212 is subject to Phosphoserine. Omega-N-methylarginine is present on R235. The short motif at 238–260 is the Bipartite nuclear localization signal element; that stretch reads KRKMIQPFNKPGGTFIKKPKLAK. K240 participates in a covalent cross-link: Glycyl lysine isopeptide (Lys-Gly) (interchain with G-Cter in SUMO2). An N6-acetyllysine; alternate modification is found at K247. K247 participates in a covalent cross-link: Glycyl lysine isopeptide (Lys-Gly) (interchain with G-Cter in SUMO2); alternate. The interval 248–302 is disordered; it reads PGGTFIKKPKLAKPVEKMSLSKSPTKTDPKNEEEEKRRIEARREKQRRRREKNSE. T251 carries the phosphothreonine modification. Glycyl lysine isopeptide (Lys-Gly) (interchain with G-Cter in SUMO2) cross-links involve residues K254 and K264. S270 is subject to Phosphoserine. The span at 272–290 shows a compositional bias: basic and acidic residues; the sequence is TKTDPKNEEEEKRRIEARR. The C2H2 AKAP95-type 1 zinc-finger motif lies at 314–336; the sequence is CSFCKFRTFEEKDIELHLESASH. K401 is covalently cross-linked (Glycyl lysine isopeptide (Lys-Gly) (interchain with G-Cter in SUMO2)). The C2H2 AKAP95-type 2 zinc-finger motif lies at 407–430; that stretch reads CSACSVYIPALHSSVQQHLKSPDH. Glycyl lysine isopeptide (Lys-Gly) (interchain with G-Cter in SUMO2) cross-links involve residues K459 and K467. Residues 470-579 are disordered; it reads NPFEIQDHSQ…GFSVDQAEEN (110 aa). Acidic residues-rich tracts occupy residues 483 to 520, 529 to 541, and 549 to 565; these read IEGD…EEVG, GDTE…EGEG, and GEGE…EEAK.

It belongs to the AKAP95 family. As to quaternary structure, component of the DBIRD complex. Interacts with CCAR2; the interaction is direct.

It is found in the nucleus matrix. Functionally, core component of the DBIRD complex, a multiprotein complex that acts at the interface between core mRNP particles and RNA polymerase II (RNAPII) and integrates transcript elongation with the regulation of alternative splicing: the DBIRD complex affects local transcript elongation rates and alternative splicing of a large set of exons embedded in (A + T)-rich DNA regions. May play a role in neuronal differentiation and is able to bind DNA and activate expression in vitro. This Bos taurus (Bovine) protein is DBIRD complex subunit ZNF326 (ZNF326).